A 338-amino-acid chain; its full sequence is Probable arabinan endo-1,5-alpha-L-arabinosidase A (338 aa).

Residues Met1–Ala20 form the signal peptide. Catalysis depends on Asp33, which acts as the Proton acceptor. The active-site Proton donor is Glu217.

It belongs to the glycosyl hydrolase 43 family.

The protein resides in the secreted. The catalysed reaction is Endohydrolysis of (1-&gt;5)-alpha-arabinofuranosidic linkages in (1-&gt;5)-arabinans.. It participates in glycan metabolism; L-arabinan degradation. Endo-1,5-alpha-L-arabinanase involved in degradation of pectin. Its preferred substrate is linear 1,5-alpha-L-arabinan. This is Probable arabinan endo-1,5-alpha-L-arabinosidase A (abnA) from Aspergillus terreus (strain NIH 2624 / FGSC A1156).